A 360-amino-acid chain; its full sequence is D-xylose 1-dehydrogenase [NADP(+)] (360 aa).

This sequence belongs to the Gfo/Idh/MocA family. In terms of assembly, homotretramer.

The catalysed reaction is D-xylofuranose + NADP(+) = D-xylono-1,4-lactone + NADPH + H(+). In terms of biological role, NADP-dependent D-xylose dehydrogenase involved in the degradation of D-xylose, a major component of hemicelluloses such as xylan. In addition to D-xylose, oxidizes D-ribose at similar kinetic constants, whereas D-glucose is oxidized with about 70-fold lower catalytic efficiency. This is D-xylose 1-dehydrogenase [NADP(+)] (gfo6) from Haloarcula marismortui (strain ATCC 43049 / DSM 3752 / JCM 8966 / VKM B-1809) (Halobacterium marismortui).